Here is a 338-residue protein sequence, read N- to C-terminus: Peptidyl-prolyl cis-trans isomerase cyp11 (338 aa).

The 166-residue stretch at 7 to 172 folds into the PPIase cyclophilin-type domain; it reads FFDIDVDGNR…HNVMIANCGE (166 aa). Residues 186–338 are disordered; the sequence is ASAVSDESED…RGRFKYRPTY (153 aa). The span at 208 to 218 shows a compositional bias: acidic residues; it reads DDSSSDEDSEE. Residues 223–242 are compositionally biased toward basic residues; it reads RTKKKRSRKHSKKDKKKKKR. Residues 243-309 show a composition bias toward basic and acidic residues; it reads ESSNRKRSPE…PEKRSSERRV (67 aa). Over residues 329-338 the composition is skewed to basic residues; that stretch reads RGRFKYRPTY.

This sequence belongs to the cyclophilin-type PPIase family.

It catalyses the reaction [protein]-peptidylproline (omega=180) = [protein]-peptidylproline (omega=0). Functionally, PPIases accelerate the folding of proteins. It catalyzes the cis-trans isomerization of proline imidic peptide bonds in oligopeptides. The sequence is that of Peptidyl-prolyl cis-trans isomerase cyp11 (cyp11) from Rhizopus delemar (strain RA 99-880 / ATCC MYA-4621 / FGSC 9543 / NRRL 43880) (Mucormycosis agent).